The sequence spans 129 residues: Replication initiation control protein YabA (129 aa).

Zn(2+) is bound by residues His-103, Cys-105, Cys-119, and Cys-122.

Belongs to the YabA family. In terms of assembly, homotetramer. Interacts with both DnaA and DnaN, acting as a bridge between these two proteins. Requires Zn(2+) as cofactor.

It is found in the cytoplasm. The protein localises to the nucleoid. Its function is as follows. Involved in control of chromosome replication initiation. Inhibits the cooperative binding of DnaA to the oriC region, thus negatively regulating initiation of chromosome replication. Inhibits the ability of DnaA-ATP to form a helix on DNA; does not disassemble preformed DnaA-DNA helices. Decreases the residence time of DnaA on the chromosome at its binding sites (oriC, replication forks and promoter-binding sites). Tethers DnaA to the replication machinery via the DNA polymerase beta sliding clamp subunit (dnaN). Associates with oriC and other DnaA targets on the chromosome in a DnaA-dependent manner. This Listeria innocua serovar 6a (strain ATCC BAA-680 / CLIP 11262) protein is Replication initiation control protein YabA.